A 70-amino-acid polypeptide reads, in one-letter code: UPF0352 protein Sden_2336 (70 aa).

The protein belongs to the UPF0352 family.

The protein is UPF0352 protein Sden_2336 of Shewanella denitrificans (strain OS217 / ATCC BAA-1090 / DSM 15013).